Consider the following 184-residue polypeptide: Large ribosomal subunit protein uL5 (184 aa).

It belongs to the universal ribosomal protein uL5 family. As to quaternary structure, part of the 50S ribosomal subunit; part of the 5S rRNA/L5/L18/L25 subcomplex. Contacts the 5S rRNA and the P site tRNA. Forms a bridge to the 30S subunit in the 70S ribosome.

Its function is as follows. This is one of the proteins that bind and probably mediate the attachment of the 5S RNA into the large ribosomal subunit, where it forms part of the central protuberance. In the 70S ribosome it contacts protein S13 of the 30S subunit (bridge B1b), connecting the 2 subunits; this bridge is implicated in subunit movement. Contacts the P site tRNA; the 5S rRNA and some of its associated proteins might help stabilize positioning of ribosome-bound tRNAs. The protein is Large ribosomal subunit protein uL5 of Fervidobacterium nodosum (strain ATCC 35602 / DSM 5306 / Rt17-B1).